Here is a 1398-residue protein sequence, read N- to C-terminus: DNA-directed RNA polymerase subunit beta' (1398 aa).

Residues Cys71, Cys73, Cys86, and Cys89 each contribute to the Zn(2+) site. Positions 462, 464, and 466 each coordinate Mg(2+). 4 residues coordinate Zn(2+): Cys810, Cys883, Cys890, and Cys893. Positions 1377–1398 (EKQAAVVSPAPEAELPALPPAE) are disordered. Residues 1380–1392 (AAVVSPAPEAELP) show a composition bias toward low complexity.

This sequence belongs to the RNA polymerase beta' chain family. As to quaternary structure, the RNAP catalytic core consists of 2 alpha, 1 beta, 1 beta' and 1 omega subunit. When a sigma factor is associated with the core the holoenzyme is formed, which can initiate transcription. Requires Mg(2+) as cofactor. The cofactor is Zn(2+).

The enzyme catalyses RNA(n) + a ribonucleoside 5'-triphosphate = RNA(n+1) + diphosphate. In terms of biological role, DNA-dependent RNA polymerase catalyzes the transcription of DNA into RNA using the four ribonucleoside triphosphates as substrates. The chain is DNA-directed RNA polymerase subunit beta' from Bradyrhizobium diazoefficiens (strain JCM 10833 / BCRC 13528 / IAM 13628 / NBRC 14792 / USDA 110).